The primary structure comprises 90 residues: Small ribosomal subunit protein uS19 (90 aa).

It belongs to the universal ribosomal protein uS19 family.

Protein S19 forms a complex with S13 that binds strongly to the 16S ribosomal RNA. The protein is Small ribosomal subunit protein uS19 of Hydrogenovibrio crunogenus (strain DSM 25203 / XCL-2) (Thiomicrospira crunogena).